We begin with the raw amino-acid sequence, 518 residues long: Cytochrome P450 monooxygenase psoD (518 aa).

A heme-binding site is contributed by C442.

The protein belongs to the cytochrome P450 family. Requires heme as cofactor.

It functions in the pathway secondary metabolite biosynthesis. Its function is as follows. Cytochrome P450 monooxygenase; part of the gene cluster that mediates the biosynthesis of pseurotin A, a competitive inhibitor of chitin synthase and an inducer of nerve-cell proliferation. The PKS-NRPS hybrid synthetase psoA is responsible for the biosynthesis of azaspirene, one of the first intermediates having the 1-oxa-7-azaspiro[4,4]-non-2-ene-4,6-dione core of pseurotin, via condensation of one acetyl-CoA, 4 malonyl-CoA, and a L-phenylalanine molecule. The dual-functional monooxygenase/methyltransferase psoF seems to be involved in the addition of the C3 methyl group onto the pseurotin scaffold. Azaspirene is then converted to synerazol through 4 steps including oxidation of C17 by the cytochrome P450 monooxygenase psoD, O-methylation of the hydroxy group of C8 by the methyltransferase psoC, and the trans-to-cis isomerization of the C13 olefin by the glutathione S-transferase psoE. The fourth step of synerazol production is performed by the dual-functional monooxygenase/methyltransferase psoF which seems to catalyze the epoxidation of the intermediate deepoxy-synerazol. Synerazol can be attacked by a water molecule nonenzymatically at two different positions to yield two diol products, pseurotin A and pseurotin D. The sequence is that of Cytochrome P450 monooxygenase psoD from Aspergillus fumigatus (strain ATCC MYA-4609 / CBS 101355 / FGSC A1100 / Af293) (Neosartorya fumigata).